The sequence spans 287 residues: Ethylene-inducing xylanase 3 (287 aa).

A signal peptide spans 1-19 (MVCFSSLFVAASAIAVVFA). A GH11 domain is found at 31 to 219 (QSTPSSQGTH…SSGSARINVA (189 aa)). Catalysis depends on Glu115, which acts as the Nucleophile. Catalysis depends on Glu206, which acts as the Proton donor. Residues 252-287 (SCAARWGQCGGSGWNGATCCSAGTCQAQNQWYSQCL) form the CBM1 domain.

The protein belongs to the glycosyl hydrolase 11 (cellulase G) family.

The catalysed reaction is Endohydrolysis of (1-&gt;4)-beta-D-xylosidic linkages in xylans.. It participates in glycan degradation; xylan degradation. Functionally, endo-1,4-beta-xylanase involved in the hydrolysis of xylan, a major structural heterogeneous polysaccharide found in plant biomass representing the second most abundant polysaccharide in the biosphere, after cellulose. Exhibits immunity-inducing activity and induces cell death in Nicotiana benthamiana. The chain is Ethylene-inducing xylanase 3 from Verticillium longisporum (Verticillium dahliae var. longisporum).